We begin with the raw amino-acid sequence, 920 residues long: Coatomer subunit beta'-1 (920 aa).

WD repeat units follow at residues 13–52, 55–94, 97–136, 140–180, 183–224, 227–266, 350–392, and 460–500; these read QRSERVKSVDLHPTEPWILASLYSGTLCIWNYQTQTMVKS, VTELPVRSAKFIARKQWVVAGADDMFIRVYNYNTMDKIKV, AHADYIRCVAVHPTLPYVLSSSDDMLIKLWDWEKGWLCTQ, GHSH…PNFT, AHLK…CVQT, GHTHNVSAVSFHPELPIIITGSEDGTVRIWHATTYRLENT, TCDL…GSAL, and RIDV…SYFD. Residues 850–920 are disordered; it reads LEQGDVLDEV…EQWVLTPPQE (71 aa). Residues 854 to 875 show a composition bias toward acidic residues; sequence DVLDEVGEEGEDGEEEEEEDRQ.

The protein belongs to the WD repeat COPB2 family. As to quaternary structure, oligomeric complex that consists of at least the alpha, beta, beta', gamma, delta, epsilon and zeta subunits.

The protein localises to the cytoplasm. The protein resides in the golgi apparatus membrane. Its subcellular location is the cytoplasmic vesicle. It is found in the COPI-coated vesicle membrane. In terms of biological role, the coatomer is a cytosolic protein complex that binds to dilysine motifs and reversibly associates with Golgi non-clathrin-coated vesicles, which further mediate biosynthetic protein transport from the ER, via the Golgi up to the trans Golgi network. Coatomer complex is required for budding from Golgi membranes, and is essential for the retrograde Golgi-to-ER transport of dilysine-tagged proteins. In Arabidopsis thaliana (Mouse-ear cress), this protein is Coatomer subunit beta'-1.